The primary structure comprises 602 residues: MVNNMTDLTAHDAAPAWQTRDHLDDPVIGELRNRFGPDAFTVQPTRTGVPVVWVKREQLLEVGDFLKKLPKPYVMLFDLHGMDERLRTHRDGLPAADFSVFYHLISIDRNRDIMLKVALSENDLHLPTFTKLFPNANWYERETWEMFGITFDGHPNLRRIMMPPTWEGHPLRKDYPARATEFDPFELTKAKQDLEMEALTFKPEEWGMKRGTDNEDFMFLNLGPNHPSAHGAFRIILQLDGEEIVDCVPDIGYHHRGAEKMGERQSWHSYIPYTDRIEYLGGCVNEMPYVLAVEKLAGITVPDRVNVIRVMLSELFRINSHLLYISTFIQDVGAMTPVFFAFTDRQKIYDLVEAITGFRMHPAWFRIGGVAHDLPRGWDRLLREFLEWMPKRLDSYEKAALRNTILKGRSVGVAAYTAKEALEWGTTGAGLRATGIDFDVRKWRPYSGYENFDFEVPTGGGVSDCYTRVMLKVEELRQSLRILQQCLDNMPEGPFKADHPLTTPPPKERTLQHIETLITHFLQVSWGPVMPANESFQMIEATKGINSYYLTSDGSTMSYRTRVRTPSFAHLQQIPSAIRGSLVSDLIVYLGSIDFVMSDVDR.

Positions 1 to 192 (MVNNMTDLTA…DPFELTKAKQ (192 aa)) are NADH dehydrogenase I subunit C. Residues 216–602 (DFMFLNLGPN…IDFVMSDVDR (387 aa)) form an NADH dehydrogenase I subunit D region.

This sequence in the N-terminal section; belongs to the complex I 30 kDa subunit family. In the C-terminal section; belongs to the complex I 49 kDa subunit family. As to quaternary structure, NDH-1 is composed of 13 different subunits. Subunits NuoB, CD, E, F, and G constitute the peripheral sector of the complex.

It localises to the cell inner membrane. The enzyme catalyses a quinone + NADH + 5 H(+)(in) = a quinol + NAD(+) + 4 H(+)(out). In terms of biological role, NDH-1 shuttles electrons from NADH, via FMN and iron-sulfur (Fe-S) centers, to quinones in the respiratory chain. The immediate electron acceptor for the enzyme in this species is believed to be ubiquinone. Couples the redox reaction to proton translocation (for every two electrons transferred, four hydrogen ions are translocated across the cytoplasmic membrane), and thus conserves the redox energy in a proton gradient. This is NADH-quinone oxidoreductase subunit C/D from Klebsiella pneumoniae subsp. pneumoniae (strain ATCC 700721 / MGH 78578).